We begin with the raw amino-acid sequence, 740 residues long: Ethylene receptor 1 (740 aa).

A run of 3 helical transmembrane segments spans residues 23-43, 53-73, and 95-115; these read ISDF…IYFV, WVLV…LINL, and AAVS…LLSV. The Cu cation site is built by C65 and H69. The 150-residue stretch at 158–307 folds into the GAF domain; the sequence is DRHTILKTTL…VVADQVAVAL (150 aa). In terms of domain architecture, Histidine kinase spans 350–587; that stretch reads VMNHEMRTPM…TVTFVVKLGI (238 aa). Residue H353 is modified to Phosphohistidine; by autocatalysis. One can recognise a Response regulatory domain in the interval 615-732; sequence KVLLMDENGI…KMRNVLSKLL (118 aa). Residue D663 is modified to 4-aspartylphosphate.

It belongs to the ethylene receptor family. In terms of assembly, homodimer; disulfide-linked. It depends on Cu cation as a cofactor. Post-translationally, activation probably requires a transfer of a phosphate group between a His in the transmitter domain and an Asp of the receiver domain.

Its subcellular location is the endoplasmic reticulum membrane. The catalysed reaction is ATP + protein L-histidine = ADP + protein N-phospho-L-histidine.. Its function is as follows. May act early in the ethylene signal transduction pathway, possibly as an ethylene receptor, or as a regulator of the pathway. The sequence is that of Ethylene receptor 1 (ETR1) from Pelargonium hortorum (Common geranium).